Consider the following 362-residue polypeptide: Flagellar P-ring protein (362 aa).

Positions 1–18 (MKHIALIVLYFLSFSVQA) are cleaved as a signal peptide.

Belongs to the FlgI family. In terms of assembly, the basal body constitutes a major portion of the flagellar organelle and consists of four rings (L,P,S, and M) mounted on a central rod.

Its subcellular location is the periplasm. It localises to the bacterial flagellum basal body. Assembles around the rod to form the L-ring and probably protects the motor/basal body from shearing forces during rotation. This Marinomonas sp. (strain MWYL1) protein is Flagellar P-ring protein.